The chain runs to 217 residues: tRNA (guanine-N(7)-)-methyltransferase (217 aa).

S-adenosyl-L-methionine is bound by residues Glu48, Glu73, Asn100, and Asp123. Asp123 is an active-site residue. Residues Lys127 and Asp159 each coordinate substrate.

Belongs to the class I-like SAM-binding methyltransferase superfamily. TrmB family.

The catalysed reaction is guanosine(46) in tRNA + S-adenosyl-L-methionine = N(7)-methylguanosine(46) in tRNA + S-adenosyl-L-homocysteine. It participates in tRNA modification; N(7)-methylguanine-tRNA biosynthesis. Functionally, catalyzes the formation of N(7)-methylguanine at position 46 (m7G46) in tRNA. This chain is tRNA (guanine-N(7)-)-methyltransferase, found in Leptospira interrogans serogroup Icterohaemorrhagiae serovar Lai (strain 56601).